The primary structure comprises 130 residues: MAYAIIETGGKQVRVEPGRFYDIELLSVEPDEKVTIDSVLLVQNDGEVTIGQPLVAGATVQGTVLRHLRGRKVLVYKMKPKKKTRKKRGHRQEITRLLIDSITLNGTVLTAPTATEETADATPDTETAAE.

The interval 110 to 130 is disordered; that stretch reads TAPTATEETADATPDTETAAE.

The protein belongs to the bacterial ribosomal protein bL21 family. In terms of assembly, part of the 50S ribosomal subunit. Contacts protein L20.

Functionally, this protein binds to 23S rRNA in the presence of protein L20. This chain is Large ribosomal subunit protein bL21, found in Nostoc sp. (strain PCC 7120 / SAG 25.82 / UTEX 2576).